The following is a 414-amino-acid chain: Cytochrome P450 GfsF (414 aa).

Residues 1–32 (MTDTTLVEAGDPAEDAPEWPMKRDTGCPFDPP) are disordered. Heme b is bound by residues histidine 75, histidine 107, arginine 111, arginine 303, histidine 361, and cysteine 363.

This sequence belongs to the cytochrome P450 family. In terms of assembly, monomer. Heme b is required as a cofactor.

Its pathway is antibiotic biosynthesis. Its function is as follows. Involved in the synthesis of the 16-membered macrolide antibiotics FD-891 and FD-892. Consecutively catalyzes epoxidation of C8-C9 and then hydroxylation at C10 to convert 25-O-methyl-FD-892 to FD-891. Consecutively catalyzes epoxidation of C8-C9 and then hydroxylation at C10 to convert 8,9-epoxy-FD-892 to 25-O-demethyl-FD-891 as well as converting 25-oxo-FD-892 to 8,9-epoxy-25-oxo-FD-892 and 8,9-epoxy-10-hydroxy-25-oxo-FD-892. In vitro is furnished with P.putida putidaredoxin and putidaredoxin reductase to provide the required two-electron reduction. The chain is Cytochrome P450 GfsF from Streptomyces halstedii.